The primary structure comprises 157 residues: SsrA-binding protein (157 aa).

A disordered region spans residues 130–157; the sequence is HDKRQDMAKKDSQRRIQKELGQRQKGME. Over residues 132–157 the composition is skewed to basic and acidic residues; sequence KRQDMAKKDSQRRIQKELGQRQKGME.

Belongs to the SmpB family.

It localises to the cytoplasm. Required for rescue of stalled ribosomes mediated by trans-translation. Binds to transfer-messenger RNA (tmRNA), required for stable association of tmRNA with ribosomes. tmRNA and SmpB together mimic tRNA shape, replacing the anticodon stem-loop with SmpB. tmRNA is encoded by the ssrA gene; the 2 termini fold to resemble tRNA(Ala) and it encodes a 'tag peptide', a short internal open reading frame. During trans-translation Ala-aminoacylated tmRNA acts like a tRNA, entering the A-site of stalled ribosomes, displacing the stalled mRNA. The ribosome then switches to translate the ORF on the tmRNA; the nascent peptide is terminated with the 'tag peptide' encoded by the tmRNA and targeted for degradation. The ribosome is freed to recommence translation, which seems to be the essential function of trans-translation. In Alkaliphilus metalliredigens (strain QYMF), this protein is SsrA-binding protein.